We begin with the raw amino-acid sequence, 371 residues long: DNA repair protein RAD14 (371 aa).

The disordered stretch occupies residues 26-48 (LSSDQLNRIESRNEPLKTRPLAV). The span at 32–42 (NRIESRNEPLK) shows a compositional bias: basic and acidic residues. Cys191, Cys194, Cys213, and Cys216 together coordinate Zn(2+). The segment at 191 to 216 (CIECHINIEMDPVLHDVFKLQVCKQC) is a zinc-finger region.

Belongs to the XPA family. As to quaternary structure, two monomers bind to kinked/damaged DNA (construct with only the C-terminal DNA-binding domain). Component of the nucleotide excision repair factor 1 (NEF1) complex consisting of RAD1, RAD10 and RAD14.

It localises to the nucleus. Functionally, involved in nucleotide excision repair. Binds specifically to damaged DNA. Required for the incision step. In Saccharomyces cerevisiae (strain ATCC 204508 / S288c) (Baker's yeast), this protein is DNA repair protein RAD14 (RAD14).